A 240-amino-acid polypeptide reads, in one-letter code: Biosynthetic peptidoglycan transglycosylase (240 aa).

The chain crosses the membrane as a helical span at residues Ala12–Pro31.

It belongs to the glycosyltransferase 51 family.

It is found in the cell inner membrane. The catalysed reaction is [GlcNAc-(1-&gt;4)-Mur2Ac(oyl-L-Ala-gamma-D-Glu-L-Lys-D-Ala-D-Ala)](n)-di-trans,octa-cis-undecaprenyl diphosphate + beta-D-GlcNAc-(1-&gt;4)-Mur2Ac(oyl-L-Ala-gamma-D-Glu-L-Lys-D-Ala-D-Ala)-di-trans,octa-cis-undecaprenyl diphosphate = [GlcNAc-(1-&gt;4)-Mur2Ac(oyl-L-Ala-gamma-D-Glu-L-Lys-D-Ala-D-Ala)](n+1)-di-trans,octa-cis-undecaprenyl diphosphate + di-trans,octa-cis-undecaprenyl diphosphate + H(+). Its pathway is cell wall biogenesis; peptidoglycan biosynthesis. Its function is as follows. Peptidoglycan polymerase that catalyzes glycan chain elongation from lipid-linked precursors. In Pseudomonas fluorescens (strain ATCC BAA-477 / NRRL B-23932 / Pf-5), this protein is Biosynthetic peptidoglycan transglycosylase.